Reading from the N-terminus, the 270-residue chain is 3-methyl-2-oxobutanoate hydroxymethyltransferase (270 aa).

2 residues coordinate Mg(2+): D50 and D89. 3-methyl-2-oxobutanoate-binding positions include 50–51 (DS), D89, and K118. E120 contributes to the Mg(2+) binding site. E187 serves as the catalytic Proton acceptor.

The protein belongs to the PanB family. Homodecamer; pentamer of dimers. The cofactor is Mg(2+).

The protein localises to the cytoplasm. It carries out the reaction 3-methyl-2-oxobutanoate + (6R)-5,10-methylene-5,6,7,8-tetrahydrofolate + H2O = 2-dehydropantoate + (6S)-5,6,7,8-tetrahydrofolate. The protein operates within cofactor biosynthesis; (R)-pantothenate biosynthesis; (R)-pantoate from 3-methyl-2-oxobutanoate: step 1/2. Catalyzes the reversible reaction in which hydroxymethyl group from 5,10-methylenetetrahydrofolate is transferred onto alpha-ketoisovalerate to form ketopantoate. The chain is 3-methyl-2-oxobutanoate hydroxymethyltransferase from Helicobacter pylori (strain P12).